The primary structure comprises 206 residues: Large ribosomal subunit protein uL4 (206 aa).

Residues 42-93 (KKQQGTHKTKNRSEVSRTGAKMYKQKGTGRARHHSARAPQFRGGGKAHGPVV) are disordered. A compositionally biased stretch (basic residues) spans 64–77 (YKQKGTGRARHHSA).

Belongs to the universal ribosomal protein uL4 family. In terms of assembly, part of the 50S ribosomal subunit.

One of the primary rRNA binding proteins, this protein initially binds near the 5'-end of the 23S rRNA. It is important during the early stages of 50S assembly. It makes multiple contacts with different domains of the 23S rRNA in the assembled 50S subunit and ribosome. Functionally, forms part of the polypeptide exit tunnel. The sequence is that of Large ribosomal subunit protein uL4 from Agrobacterium fabrum (strain C58 / ATCC 33970) (Agrobacterium tumefaciens (strain C58)).